The primary structure comprises 196 residues: MLYTKKLNKKKLNTKEINIKTGKKFYSIRLHKINEEIKAKTVRLTGINGVQLGIVPIKEAIFKSLELEMDLVEISPNSNPPVCKIMNYGKFLYEKNKSNKEQKRKQKIINTKEIKFRPNTDTGDYKVKLRNLTRFLENGKKVKISLRFRGREMVHKKIGINMLNRICSDLKEISSIESFPNKIEGRQMTLILVPKK.

Belongs to the IF-3 family. Monomer.

It localises to the cytoplasm. In terms of biological role, IF-3 binds to the 30S ribosomal subunit and shifts the equilibrium between 70S ribosomes and their 50S and 30S subunits in favor of the free subunits, thus enhancing the availability of 30S subunits on which protein synthesis initiation begins. In Wigglesworthia glossinidia brevipalpis, this protein is Translation initiation factor IF-3.